Consider the following 399-residue polypeptide: S-adenosylmethionine synthase (399 aa).

H15 contributes to the ATP binding site. D17 provides a ligand contact to Mg(2+). E43 provides a ligand contact to K(+). E56 and Q99 together coordinate L-methionine. The tract at residues 99 to 109 (QSADIAQGVDN) is flexible loop. ATP-binding positions include 174 to 176 (DGK), 244 to 245 (RF), D253, 259 to 260 (RK), A276, and K280. D253 lines the L-methionine pocket. K284 contacts L-methionine.

Belongs to the AdoMet synthase family. Homotetramer; dimer of dimers. Mg(2+) is required as a cofactor. K(+) serves as cofactor.

Its subcellular location is the cytoplasm. It carries out the reaction L-methionine + ATP + H2O = S-adenosyl-L-methionine + phosphate + diphosphate. Its pathway is amino-acid biosynthesis; S-adenosyl-L-methionine biosynthesis; S-adenosyl-L-methionine from L-methionine: step 1/1. Functionally, catalyzes the formation of S-adenosylmethionine (AdoMet) from methionine and ATP. The overall synthetic reaction is composed of two sequential steps, AdoMet formation and the subsequent tripolyphosphate hydrolysis which occurs prior to release of AdoMet from the enzyme. The sequence is that of S-adenosylmethionine synthase from Salinispora arenicola (strain CNS-205).